Here is a 195-residue protein sequence, read N- to C-terminus: Packaging protein 2 (195 aa).

A disordered region spans residues 1–124 (MAPKKKLQLP…QEQQQRQGYR (124 aa)). Acidic residues predominate over residues 15–53 (TDEEEYWDSQAEEVLDEEEEMMEDWDSLDEASEAEEVSD). The segment covering 54 to 63 (ETPSPSVAFP) has biased composition (low complexity).

It belongs to the adenoviridae splicing factor family. Part of a genome packaging complex composed of packaging proteins 1, 2 and 3; this complex specifically binds to the packaging sequence on the left end of viral genomic DNA and performs packaging of the viral genome. Self-assembles into higher-order structures.

The protein localises to the host nucleus. In terms of biological role, component of the packaging machinery which encapsidates the viral DNA into preformed capsids and transcriptional activator of the viral major late promoter (MLP). Binds, along with packaging proteins 1 and 3, to the specific packaging sequence on the left end of viral genomic DNA and plays an active role in packaging of the viral genome into preformed capsids. Specifically binds to the 5'-TTTG-3' nucleotides of the repeats making up the packaging sequence. Forms a transcription factor called DEF-A through cooperative binding with packaging protein 1. DEF-A binds to downstream elements of the major late promoter (MLP) and stimulates transcription from the MLP after initiation of viral DNA replication. Simultaneously suppresses early gene expression and is thus likely to participate in the early-late switch in the expression pattern of the late viral proteins. May as well enhance transcription from IVa2 and pIX promoters. This is Packaging protein 2 from Homo sapiens (Human).